Here is a 921-residue protein sequence, read N- to C-terminus: Isoleucine--tRNA ligase (921 aa).

Residues 57 to 67 carry the 'HIGH' region motif; sequence PYANGNIHVGT. Glu-551 lines the L-isoleucyl-5'-AMP pocket. Residues 592–596 carry the 'KMSKS' region motif; the sequence is KMSKS. Lys-595 lines the ATP pocket. Residues Cys-885, Cys-888, Cys-905, and Cys-908 each contribute to the Zn(2+) site.

This sequence belongs to the class-I aminoacyl-tRNA synthetase family. IleS type 1 subfamily. Monomer. Zn(2+) is required as a cofactor.

It localises to the cytoplasm. The catalysed reaction is tRNA(Ile) + L-isoleucine + ATP = L-isoleucyl-tRNA(Ile) + AMP + diphosphate. In terms of biological role, catalyzes the attachment of isoleucine to tRNA(Ile). As IleRS can inadvertently accommodate and process structurally similar amino acids such as valine, to avoid such errors it has two additional distinct tRNA(Ile)-dependent editing activities. One activity is designated as 'pretransfer' editing and involves the hydrolysis of activated Val-AMP. The other activity is designated 'posttransfer' editing and involves deacylation of mischarged Val-tRNA(Ile). The polypeptide is Isoleucine--tRNA ligase (Kosmotoga olearia (strain ATCC BAA-1733 / DSM 21960 / TBF 19.5.1)).